The primary structure comprises 2559 residues: Ubiquitin carboxyl-terminal hydrolase 9X (2559 aa).

A compositionally biased stretch (polar residues) spans 1 to 44; the sequence is MTATTRGSPVGGNDNQGQAPDGQSQPPLQQNQTSSPDSSNENSP. The segment at 1–64 is disordered; the sequence is MTATTRGSPV…DAPPQIEDEE (64 aa). 3 positions are modified to phosphoserine: Ser-374, Ser-375, and Ser-588. Positions 967–999 are disordered; sequence QISSNMPSSPDSSSDSSTGSPGNHGNHYSDGPN. The span at 969–989 shows a compositional bias: low complexity; the sequence is SSNMPSSPDSSSDSSTGSPGN. Residues 1557–1956 form the USP domain; sequence VGLKNAGATC…NAYILFYERM (400 aa). Cys-1566 serves as the catalytic Nucleophile. A disordered region spans residues 1592–1633; that stretch reads GSDVDDDMSGDEKQDNESNVDPRDDVFGYPQQFEDKPPLSKT. Position 1600 is a phosphoserine (Ser-1600). 2 stretches are compositionally biased toward basic and acidic residues: residues 1601-1617 and 1624-1633; these read GDEK…RDDV and FEDKPPLSKT. Zn(2+) is bound by residues Cys-1727, His-1729, Cys-1771, and Cys-1774. The active-site Proton acceptor is His-1879. Ser-2443 bears the Phosphoserine mark. Residues 2475-2484 are compositionally biased toward acidic residues; the sequence is PEEEPDDQDA. A disordered region spans residues 2475-2559; the sequence is PEEEPDDQDA…QTKGSVKCTY (85 aa). 2 stretches are compositionally biased toward polar residues: residues 2503 to 2513 and 2527 to 2537; these read PGSQYQQNNHV and NNPQRTGQRAQ. Tyr-2540 is subject to Phosphotyrosine. Residue Ser-2547 is modified to Phosphoserine. Thr-2551 is modified (phosphothreonine).

This sequence belongs to the peptidase C19 family. Interacts with SMAD4, MARK4, NUAK1 and BIRC5/survivin. Interacts with DCX. Interacts with OTUD4 and USP7; the interaction is direct. As to expression, highest levels in liver and brain with expression also detected in heart, muscle, spleen and kidney (at protein leve). Ubiquitously expressed in adult tissues.

Its subcellular location is the cytoplasm. The protein resides in the cytosol. The protein localises to the cell projection. It is found in the growth cone. It localises to the cytoskeleton. Its subcellular location is the cilium axoneme. It catalyses the reaction Thiol-dependent hydrolysis of ester, thioester, amide, peptide and isopeptide bonds formed by the C-terminal Gly of ubiquitin (a 76-residue protein attached to proteins as an intracellular targeting signal).. In terms of biological role, deubiquitinase involved both in the processing of ubiquitin precursors and of ubiquitinated proteins. May therefore play an important regulatory role at the level of protein turnover by preventing degradation of proteins through the removal of conjugated ubiquitin. Specifically hydrolyzes 'Lys-11'-, followed by 'Lys-63'-, 'Lys-48'- and 'Lys-6'-linked polyubiquitins chains. Essential component of TGF-beta/BMP signaling cascade. Specifically deubiquitinates monoubiquitinated SMAD4, opposing the activity of E3 ubiquitin-protein ligase TRIM33. Deubiquitinates alkylation repair enzyme ALKBH3. OTUD4 recruits USP7 and USP9X to stabilize ALKBH3, thereby promoting the repair of alkylated DNA lesions. Deubiquitinates RNA demethylase enzyme ALKBH5, promoting its stability. Deubiquitinates mTORC2 complex component RICTOR at 'Lys-294' by removing 'Lys-63'-linked polyubiquitin chains, stabilizing RICTOR and enhancing its binding to MTOR, thus promoting mTORC2 complex assembly. Regulates chromosome alignment and segregation in mitosis by regulating the localization of BIRC5/survivin to mitotic centromeres. Involved in axonal growth and neuronal cell migration. Regulates cellular clock function by enhancing the protein stability and transcriptional activity of the core circadian protein BMAL1 via its deubiquitinating activity. Acts as a regulator of peroxisome import by mediating deubiquitination of PEX5: specifically deubiquitinates PEX5 monoubiquitinated at 'Cys-11' following its retrotranslocation into the cytosol, resetting PEX5 for a subsequent import cycle. Deubiquitinates PEG10. Inhibits the activation of the Hippo signaling pathway via deubiquitination of AMOTL2 at 'Lys-337' and 'Lys-404' which prohibits its interaction with and activation of LATS2. Loss of LATS2 activation and subsequent loss of YAP1 phosphorylation results in an increase in YAP1-driven transcription of target genes. The protein is Ubiquitin carboxyl-terminal hydrolase 9X of Mus musculus (Mouse).